The chain runs to 360 residues: MKWKKSLTGLSSYKPGKREEEVMAELGLTEITKLSSNENPLGTSPKVAAMQANSCVETEIYPDGWASSLRKEVAAFYQLEEEELIFTAGVDELIELLTRVLLDNTTNTVMATPTFVQYRQNALIEGAEVKEIPLLADGEHNLEGMLDAIDEKTTIVWICNPNNPTGNYIELADIQAFLDKVPSDVLVVLDEAYIEYVTPQPEKHEKLIRTYKNVIITRTFSKIYGLASARVGYGIADKEIINQLNIVRPPFNTTSIGQKLAIEAIKDQAFIEACRTSNANGIKQYEAFAKRFEQVKLYPANGNFVLIDLGIEAGTIFSYLEKNGYITRSGAALGFPTAVRITIGKEEENSAVIALLEKLL.

An N6-(pyridoxal phosphate)lysine modification is found at lysine 222.

The protein belongs to the class-II pyridoxal-phosphate-dependent aminotransferase family. Histidinol-phosphate aminotransferase subfamily. In terms of assembly, homodimer. Requires pyridoxal 5'-phosphate as cofactor.

It catalyses the reaction L-histidinol phosphate + 2-oxoglutarate = 3-(imidazol-4-yl)-2-oxopropyl phosphate + L-glutamate. It participates in amino-acid biosynthesis; L-histidine biosynthesis; L-histidine from 5-phospho-alpha-D-ribose 1-diphosphate: step 7/9. The chain is Histidinol-phosphate aminotransferase from Listeria welshimeri serovar 6b (strain ATCC 35897 / DSM 20650 / CCUG 15529 / CIP 8149 / NCTC 11857 / SLCC 5334 / V8).